The primary structure comprises 646 residues: Long-chain fatty acid transport protein 1 (646 aa).

Residues 1–13 are Extracellular-facing; it reads MRAPGAGAASVVS. The helical transmembrane segment at 14 to 34 threads the bilayer; the sequence is LALLWLLGLPWTWSAAAALGV. Residues 35-646 lie on the Cytoplasmic side of the membrane; sequence YVGSGGWRFL…TRICSGAFAL (612 aa). The tract at residues 191-475 is sufficient for oligomerization; the sequence is EVSGHLGKSL…YVSESATSKK (285 aa). An AMP-binding site is contributed by 246–257; that stretch reads YIYTSGTTGLPK.

It belongs to the ATP-dependent AMP-binding enzyme family. Self-associates. May function as a homodimer. Interacts with EPRS1; mediates the translocation of SLC27A1 from the cytoplasm to the plasma membrane thereby increasing the uptake of long-chain fatty acids. Interacts with DGAT2 and this interaction is enhanced in the presence of ZFYVE1. As to expression, highest levels of expression are detected in muscle and adipose tissue small, intermediate levels in small intestine, and barely detectable in liver. Expressed in brain gray matter.

It is found in the cell membrane. It localises to the endomembrane system. Its subcellular location is the cytoplasm. The catalysed reaction is a fatty acid(in) = a fatty acid(out). It catalyses the reaction (9Z)-octadecenoate(out) = (9Z)-octadecenoate(in). The enzyme catalyses hexadecanoate(out) = hexadecanoate(in). It carries out the reaction (9Z,12Z)-octadecadienoate(out) = (9Z,12Z)-octadecadienoate(in). The catalysed reaction is (5Z,8Z,11Z,14Z)-eicosatetraenoate(out) = (5Z,8Z,11Z,14Z)-eicosatetraenoate(in). It catalyses the reaction a long-chain fatty acid + ATP + CoA = a long-chain fatty acyl-CoA + AMP + diphosphate. The enzyme catalyses (5Z,8Z,11Z,14Z)-eicosatetraenoate + ATP + CoA = (5Z,8Z,11Z,14Z)-eicosatetraenoyl-CoA + AMP + diphosphate. It carries out the reaction a very long-chain fatty acid + ATP + CoA = a very long-chain fatty acyl-CoA + AMP + diphosphate. The catalysed reaction is tetracosanoate + ATP + CoA = tetracosanoyl-CoA + AMP + diphosphate. Inhibited by Triacsin C. Mediates the import of long-chain fatty acids (LCFA) into the cell by facilitating their transport at the plasma membrane. Also functions as an acyl-CoA ligase catalyzing the ATP-dependent formation of fatty acyl-CoA using LCFA and very-long-chain fatty acids (VLCFA) as substrates, which prevents fatty acid efflux from cells and might drive more fatty acid uptake. May act directly as a bona fide transporter, or alternatively, in a cytoplasmic or membrane-associated multimeric protein complex to trap and draw fatty acids towards accumulation. Plays a pivotal role in regulating available LCFA substrates from exogenous sources in tissues undergoing high levels of beta-oxidation or triglyceride synthesis. May be involved in regulation of cholesterol metabolism. Probably involved in fatty acid transport across the blood barrier. The polypeptide is Long-chain fatty acid transport protein 1 (Homo sapiens (Human)).